The primary structure comprises 637 residues: DNA damage-binding protein CMR1 (637 aa).

Disordered stretches follow at residues 1–91 and 144–168; these read MIES…EEEA and LVDTKDENKRRSANKPDPQFSTERR. Composition is skewed to basic and acidic residues over residues 8–23 and 74–91; these read EQERLKNIRENERLMK and AGHEADSETLKRKYEEEA. WD repeat units lie at residues 185-226, 255-295, 297-321, 361-401, and 431-470; these read VTPK…FASN, HARS…SEEI, AGEEDVLLSIFDVLSPSTHPSVYMD, VCEK…SVVK, and KARQACTSVDFSPRGDQLVGVSYDDVVKVWSMEPGSLFSE. Disordered stretches follow at residues 482–508 and 525–549; these read SNKPKGAVKKQVPDSASDTGPGLLSWL and KQEQDAPSPSLSKRPDDVLANPTRI. WD repeat units follow at residues 556-598 and 602-637; these read GKWL…LRSL and NLVTAVPAVTCMHPVLPARLVTGNASGRCTFWSPDP.

Belongs to the WD repeat DDB2/WDR76 family.

In terms of biological role, DNA-binding protein that binds to both single- and double-stranded DNA. Binds preferentially to UV-damaged DNA. May be involved in DNA-metabolic processes. In Mycosarcoma maydis (Corn smut fungus), this protein is DNA damage-binding protein CMR1.